We begin with the raw amino-acid sequence, 481 residues long: Heat stress transcription factor A-1b (481 aa).

A compositionally biased stretch (low complexity) spans 1–16 (MESVPESVPSPNSNTP). The interval 1–23 (MESVPESVPSPNSNTPSIPPPVN) is disordered. A DNA-binding region spans residues 25–119 (VPPFLSKTYD…LLKSIVRRKP (95 aa)). A hydrophobic repeat HR-A/B region spans residues 138-204 (ACVEVGKFGI…QMMSFLAKAV (67 aa)). Over residues 213-227 (LVQQNNNDGNRQIPG) the composition is skewed to polar residues. Positions 213–244 (LVQQNNNDGNRQIPGSNKKRRLPVDEQENRGD) are disordered. Residues 229–233 (NKKRR) carry the Nuclear localization signal motif. Residues 234-243 (LPVDEQENRG) show a composition bias toward basic and acidic residues. Residues 418-427 (DPFWEQFFSV) carry the AHA motif. The short motif at 467 to 474 (LTEQMGLL) is the Nuclear export signal element.

This sequence belongs to the HSF family. Class A subfamily. Homotrimer. Binds to HSBP. In terms of processing, exhibits temperature-dependent phosphorylation.

It is found in the cytoplasm. Its subcellular location is the nucleus. Its function is as follows. Transcriptional activator that specifically binds DNA sequence 5'-AGAAnnTTCT-3' known as heat shock promoter elements (HSE). In Arabidopsis thaliana (Mouse-ear cress), this protein is Heat stress transcription factor A-1b (HSFA1B).